The sequence spans 248 residues: Triosephosphate isomerase (248 aa).

The substrate site is built by Asn-10 and Lys-12. The active-site Electrophile is the His-95. The Proton acceptor role is filled by Glu-165.

The protein belongs to the triosephosphate isomerase family. Homodimer.

The protein resides in the cytoplasm. It carries out the reaction D-glyceraldehyde 3-phosphate = dihydroxyacetone phosphate. It functions in the pathway carbohydrate biosynthesis; gluconeogenesis. The protein operates within carbohydrate degradation; glycolysis; D-glyceraldehyde 3-phosphate from glycerone phosphate: step 1/1. The protein is Triosephosphate isomerase (TPI1) of Candida albicans (strain SC5314 / ATCC MYA-2876) (Yeast).